Consider the following 655-residue polypeptide: Archaeal Lon protease (655 aa).

Residues 1 to 123 (MEENIESVEE…KAEREKRDRS (123 aa)) are Cytoplasmic-facing. 57–64 (GEPGTGKS) serves as a coordination point for ATP. A helical transmembrane segment spans residues 124–144 (RSIMFVIFSVVLLGIIAAIVL). Arg145 is a topological domain (extracellular). The chain crosses the membrane as a helical span at residues 146–166 (SITLIFFAIMAAAFLYMAMAF). At 167–655 (NPVIRNEKAM…ASTRAGQNVA (489 aa)) the chain is on the cytoplasmic side. Residues 433-618 (GSVVGMVNGL…EDVLKVALVN (186 aa)) form the Lon proteolytic domain. Residues Ser525 and Lys568 contribute to the active site.

Belongs to the peptidase S16 family. Archaeal LonB subfamily. Homohexamer. Organized in a ring with a central cavity.

The protein localises to the cell membrane. In terms of biological role, ATP-dependent serine protease that mediates the selective degradation of mutant and abnormal proteins as well as certain short-lived regulatory proteins. Degrades polypeptides processively. This Thermoplasma volcanium (strain ATCC 51530 / DSM 4299 / JCM 9571 / NBRC 15438 / GSS1) protein is Archaeal Lon protease.